An 874-amino-acid polypeptide reads, in one-letter code: Alanine--tRNA ligase (874 aa).

4 residues coordinate Zn(2+): His559, His563, Cys661, and His665.

This sequence belongs to the class-II aminoacyl-tRNA synthetase family. The cofactor is Zn(2+).

The protein resides in the cytoplasm. The enzyme catalyses tRNA(Ala) + L-alanine + ATP = L-alanyl-tRNA(Ala) + AMP + diphosphate. In terms of biological role, catalyzes the attachment of alanine to tRNA(Ala) in a two-step reaction: alanine is first activated by ATP to form Ala-AMP and then transferred to the acceptor end of tRNA(Ala). Also edits incorrectly charged Ser-tRNA(Ala) and Gly-tRNA(Ala) via its editing domain. The chain is Alanine--tRNA ligase from Microcystis aeruginosa (strain NIES-843 / IAM M-2473).